The primary structure comprises 87 residues: Serine rich endogenous peptide 17 (87 aa).

The signal sequence occupies residues 1-28 (MTGKAPFFVILIAALLLLSSFFFGEVKA). The segment at 32–87 (KQPKHRKLGNREGDENRSNEIVVQMKARVKRSKSKRGPQKKEPYKKPPCSPPTHPA) is disordered. Residues 40 to 49 (GNREGDENRS) show a composition bias toward basic and acidic residues. The short motif at 51 to 71 (EIVVQMKARVKRSKSKRGPQK) is the SCOOP motif element. Residues 58-69 (ARVKRSKSKRGP) are compositionally biased toward basic residues. Positions 63–65 (SKS) match the SxS motif essential for MIK2 binding motif. Residues 77 to 87 (KPPCSPPTHPA) show a composition bias toward pro residues.

The protein belongs to the serine rich endogenous peptide (SCOOP) phytocytokine family. As to quaternary structure, interacts with MIK2 (via extracellular leucine-rich repeat domain); this interaction triggers the formation of complex between MIK2 and the BAK1/SERK3 and SERK4 coreceptors, and subsequent BAK1 activation by phosphorylation.

It localises to the cell membrane. The protein localises to the secreted. Its subcellular location is the extracellular space. It is found in the apoplast. Brassicaceae-specific phytocytokine (plant endogenous peptide released into the apoplast) perceived by MIK2 in a BAK1/SERK3 and SERK4 coreceptors-dependent manner, that modulates various physiological and antimicrobial processes including growth prevention and reactive oxygen species (ROS) response regulation. The polypeptide is Serine rich endogenous peptide 17 (Arabidopsis thaliana (Mouse-ear cress)).